The sequence spans 367 residues: 2,6-dihydropseudooxynicotine hydrolase (367 aa).

Residues Glu-148, Ser-217, Asp-300, and His-329 contribute to the active site.

It belongs to the AB hydrolase superfamily. As to quaternary structure, homodimer.

It carries out the reaction 2,6-dihydroxypseudooxynicotine + H2O = 2,6-dihydroxypyridine + 4-(methylamino)butanoate + H(+). It functions in the pathway alkaloid degradation; nicotine degradation; 2,6-dihydroxypyridine and 4-(methylamino)butanoate from 6-hydroxypseudooxynicotine: step 2/2. Its function is as follows. L-nicotine is used as a growth substrate. Plays a role in nicotine catabolism by cleaving a C-C bond in 2,6-dihydroxypseudooxynicotine. The sequence is that of 2,6-dihydropseudooxynicotine hydrolase from Paenarthrobacter nicotinovorans (Arthrobacter nicotinovorans).